We begin with the raw amino-acid sequence, 657 residues long: Threonine--tRNA ligase (657 aa).

The region spanning 7–70 (ILAVIALTLP…TADAAIEIIT (64 aa)) is the TGS domain. Residues 253–555 (DHRKLGAELE…LIEHTAGNFP (303 aa)) form a catalytic region. The Zn(2+) site is built by C351, H402, and H532.

It belongs to the class-II aminoacyl-tRNA synthetase family. In terms of assembly, homodimer. The cofactor is Zn(2+).

The protein resides in the cytoplasm. The catalysed reaction is tRNA(Thr) + L-threonine + ATP = L-threonyl-tRNA(Thr) + AMP + diphosphate + H(+). Functionally, catalyzes the attachment of threonine to tRNA(Thr) in a two-step reaction: L-threonine is first activated by ATP to form Thr-AMP and then transferred to the acceptor end of tRNA(Thr). Also edits incorrectly charged L-seryl-tRNA(Thr). The protein is Threonine--tRNA ligase of Pelodictyon phaeoclathratiforme (strain DSM 5477 / BU-1).